We begin with the raw amino-acid sequence, 354 residues long: Uroporphyrinogen decarboxylase (354 aa).

Substrate is bound by residues 27–31 (RQAGR), Asp77, Tyr153, Thr208, and His326.

Belongs to the uroporphyrinogen decarboxylase family. Homodimer.

It is found in the cytoplasm. It catalyses the reaction uroporphyrinogen III + 4 H(+) = coproporphyrinogen III + 4 CO2. It participates in porphyrin-containing compound metabolism; protoporphyrin-IX biosynthesis; coproporphyrinogen-III from 5-aminolevulinate: step 4/4. Functionally, catalyzes the decarboxylation of four acetate groups of uroporphyrinogen-III to yield coproporphyrinogen-III. This Neisseria gonorrhoeae (strain NCCP11945) protein is Uroporphyrinogen decarboxylase.